We begin with the raw amino-acid sequence, 159 residues long: UPF0336 protein MAP_4107 (159 aa).

It belongs to the UPF0336 family.

The protein is UPF0336 protein MAP_4107 of Mycolicibacterium paratuberculosis (strain ATCC BAA-968 / K-10) (Mycobacterium paratuberculosis).